A 334-amino-acid chain; its full sequence is Succinate receptor 1 (334 aa).

Topologically, residues 5-31 (MAWNATCKNWLAAEAALEKYYLSIFYG) are extracellular. N-linked (GlcNAc...) asparagine glycosylation occurs at Asn8. A helical membrane pass occupies residues 32–52 (IEFVVGVLGNTIVVYGYIFSL). At 53 to 59 (KNWNSSN) the chain is on the cytoplasmic side. Residues 60 to 80 (IYLFNLSVSDLAFLCTLPMLI) traverse the membrane as a helical segment. The Extracellular segment spans residues 81–103 (RSYANGNWIYGDVLCISNRYVLH). A disulfide bridge links Cys95 with Cys172. Residues 104–124 (ANLYTSILFLTFISIDRYLII) form a helical membrane-spanning segment. At 125–137 (KYPFREHLLQKKE) the chain is on the cytoplasmic side. The chain crosses the membrane as a helical span at residues 138–158 (FAILISLAIWVLVTLELLPIL). The Extracellular portion of the chain corresponds to 159 to 185 (PLINPVITDNGTTCNDFASSGDPNYNL). N-linked (GlcNAc...) asparagine glycosylation occurs at Asn168. A helical transmembrane segment spans residues 186 to 206 (IYSMCLTLLGFLIPLFVMCFF). Over 207–230 (YYKIALFLKQRNRQVATALPLEKP) the chain is Cytoplasmic. The chain crosses the membrane as a helical span at residues 231 to 251 (LNLVIMAVVIFSVLFTPYHVM). Topologically, residues 252–281 (RNVRIASRLGSWKQYQCTQVVINSFYIVTR) are extracellular. A helical membrane pass occupies residues 282 to 302 (PLAFLNSVINPVFYFLLGDHF). The Cytoplasmic segment spans residues 303–334 (RDMLMNQLRHNFKSLTSFSRWAHELLLSFREK).

Belongs to the G-protein coupled receptor 1 family. As to expression, expressed specifically in kidney. Highly expressed in immature dendritic cells, expression rapidly downregulates after maturation. Also expressed in macrophages.

The protein localises to the cell membrane. G protein-coupled receptor for succinate able to mediate signaling through Gq/GNAQ or Gi/GNAI second messengers depending on the cell type and the processes regulated. Succinate-SUCNR1 signaling serves as a link between metabolic stress, inflammation and energy homeostasis. In macrophages, plays a range of immune-regulatory roles. During inflammation, succinate-SUCNR1 signaling may act as an anti-inflammatory mediator or boost inflammation depending on the inflammatory status of cells. Hyperpolarizes M2 macrophages versus M1 phenotype through Gq signaling by regulating the transcription of genes involved in immune function. In activated M1 macrophages, plays a pro-inflammatory role in response to LPS. Expressed in dendritic cells, where it is involved in the sensing of immunological danger and enhances immunity. Mediates succinate triggered intracelleular calcium mobilization, induces migratory responses and acts in synergy with Toll-like receptor ligands for the production of proinflammatory cytokines as well as an enhancement of antigen-specific activation of helper T cells. In the small intestine, mediates the activation of tuft cells by dietary succinate and triggers type 2 immunity. In adipocytes, plays an important role in the control of energy metabolism. In response to succinate, controls leptin expression in an AMPK-JNK-CEBPA-dependent as well as circadian clock-regulated manner. In muscle tissue, is expressed in non-muscle cells and coordinates muscle remodeling in response to the succinate produced during exercise training in a paracrine manner. In retina, acts as a mediator of vessel growth during retinal development. In response to succinate, regulates the production of angiogenic factors, including VEGF, by retinal ganglion neurons. This chain is Succinate receptor 1, found in Homo sapiens (Human).